The following is a 225-amino-acid chain: Urease accessory protein UreG (225 aa).

Positions 1–21 are disordered; that stretch reads MHLDHHHESAAAVSADARRPD. Residue 33–40 participates in GTP binding; that stretch reads GPVGSGKT.

It belongs to the SIMIBI class G3E GTPase family. UreG subfamily. As to quaternary structure, homodimer. UreD, UreF and UreG form a complex that acts as a GTP-hydrolysis-dependent molecular chaperone, activating the urease apoprotein by helping to assemble the nickel containing metallocenter of UreC. The UreE protein probably delivers the nickel.

The protein resides in the cytoplasm. Its function is as follows. Facilitates the functional incorporation of the urease nickel metallocenter. This process requires GTP hydrolysis, probably effectuated by UreG. The chain is Urease accessory protein UreG from Streptomyces coelicolor (strain ATCC BAA-471 / A3(2) / M145).